An 80-amino-acid chain; its full sequence is Exodeoxyribonuclease 7 small subunit (80 aa).

This sequence belongs to the XseB family. As to quaternary structure, heterooligomer composed of large and small subunits.

The protein resides in the cytoplasm. The catalysed reaction is Exonucleolytic cleavage in either 5'- to 3'- or 3'- to 5'-direction to yield nucleoside 5'-phosphates.. Its function is as follows. Bidirectionally degrades single-stranded DNA into large acid-insoluble oligonucleotides, which are then degraded further into small acid-soluble oligonucleotides. This Rickettsia massiliae (strain Mtu5) protein is Exodeoxyribonuclease 7 small subunit.